The sequence spans 294 residues: MDSINQVLKLGLPKGSLQDSTIDLFAQAGFHFSVQSRSYFPSIDDDELEAILIRAQEMAHYVELGAFDVGLTGKDWIIETDADVVEVADLVYSKASMRPVRWVLCVPESSTVRSVKDLEGKHIATEVVNITRKYLAKNGVNAMVEFSWGATEVKPPDLADAIVEVTETGSSLRANKLRIVDTILESNTKLIANKASWNDPWKREKIENMAMLLLGAINAQGKVGLKMNAPKSAIDKILAIIPALRQPTISSLAEEQWVALEVIVSEKTVRKLIPELKRAGAEGIFEYNINKLID.

Belongs to the ATP phosphoribosyltransferase family. Long subfamily. Requires Mg(2+) as cofactor.

The protein resides in the cytoplasm. It catalyses the reaction 1-(5-phospho-beta-D-ribosyl)-ATP + diphosphate = 5-phospho-alpha-D-ribose 1-diphosphate + ATP. The protein operates within amino-acid biosynthesis; L-histidine biosynthesis; L-histidine from 5-phospho-alpha-D-ribose 1-diphosphate: step 1/9. Its activity is regulated as follows. Feedback inhibited by histidine. In terms of biological role, catalyzes the condensation of ATP and 5-phosphoribose 1-diphosphate to form N'-(5'-phosphoribosyl)-ATP (PR-ATP). Has a crucial role in the pathway because the rate of histidine biosynthesis seems to be controlled primarily by regulation of HisG enzymatic activity. The chain is ATP phosphoribosyltransferase from Pelodictyon phaeoclathratiforme (strain DSM 5477 / BU-1).